The following is a 757-amino-acid chain: Exo-alpha-(1-&gt;6)-L-arabinopyranosidase (757 aa).

The active site involves aspartate 232.

The protein belongs to the glycosyl hydrolase 3 family. Homotetramer.

With respect to regulation, completely inhibited by Cu(2+) and activated by Co(2+). Functionally, catalyzes the hydrolysis of a non-reducing terminal alpha-L-arabinopyranosidic linkage in ginsenoside Rb2 (alpha-L-arabinopyranosyl-(1-&gt;6)-alpha-D-glucopyranosyl) to release alpha-D-glucopyranosyl (Rd). It is not able to hydrolyze alpha-L-arabinofuranosyl-(1-&gt;6)-alpha-D-glucopyranosyl (Rc). This is Exo-alpha-(1-&gt;6)-L-arabinopyranosidase (apy) from Bifidobacterium longum.